We begin with the raw amino-acid sequence, 322 residues long: D-alanine--D-alanine ligase (322 aa).

An ATP-grasp domain is found at 110–310 (KAVLAAAGIP…FDRLVFWIVE (201 aa)). 137–191 (MPPPYVVKPNAEGSSVGVSLVFEGANGPPRQLAAPDWAFGEQVMVEPYIPGLELA) contacts ATP. Mg(2+)-binding residues include aspartate 263, glutamate 277, and asparagine 279.

The protein belongs to the D-alanine--D-alanine ligase family. It depends on Mg(2+) as a cofactor. Requires Mn(2+) as cofactor.

It is found in the cytoplasm. The enzyme catalyses 2 D-alanine + ATP = D-alanyl-D-alanine + ADP + phosphate + H(+). Its pathway is cell wall biogenesis; peptidoglycan biosynthesis. In terms of biological role, cell wall formation. This is D-alanine--D-alanine ligase from Caulobacter sp. (strain K31).